The primary structure comprises 82 residues: Savignygrin (+) (82 aa).

The N-terminal stretch at Met-1–Gly-21 is a signal peptide. Intrachain disulfides connect Cys-26-Cys-79, Cys-34-Cys-59, and Cys-53-Cys-75. The Cell attachment site signature appears at Arg-35–Asp-37.

In terms of tissue distribution, expressed in salivary glands.

It is found in the cytoplasmic vesicle. The protein localises to the secretory vesicle. Its subcellular location is the secreted. Its function is as follows. Tick salivary platelet aggregation inhibitor that plays an important part in the anti-hemostatic strategy of ticks. Inhibits platelet aggregation induced by ADP (IC(50)=130 nM), collagen, the thrombin receptor-activating peptide, and epinephrine, although platelets are activated and their shape changed. Binding to platelets is similar for resting and activated platelets (Kd=50-70 nM). Acts by specifically binding to platelet membrane glycoprotein IIb-IIIa (ITGA2B/ITGB3) in a divalent metal ion dependent manner. In contrast to many disintegrins which only interacts with the beta-3 subunit, this protein interacts with the two subunits (alpha-IIb and beta-3). Also causes disaggregation of aggregated platelets without influencing the activated spherical shape associated with aggregated platelets and causes a decrease in the number of pseudopodia on the activated platelet surface. Does not show any inhibitory activity for the different serine proteases tested. The chain is Savignygrin (+) from Ornithodoros kalahariensis (Tick).